Consider the following 213-residue polypeptide: MTYWTLGVLAVGLGADAFSMALGIGMEGVRRRDAFMLGLVVALFHIFMPWFGILAGSALGLVVGRLASFIGAAVLFFLGGRMIYHAWKEKREGPAFPVSVPRRRGNGSGGGAIVGAGAIVGGRLFAPTRWELVVIGAAVSMDALSVGFSLGTVGAQLLPTVLTFGVVAGIMTVAGCRIGQQVSRMLGATAQLAGGLILLGIGIKLLLGSASPG.

Helical transmembrane passes span 6-26 (LGVL…GIGM), 34-54 (AFML…FGIL), 58-78 (ALGL…LFFL), 107-127 (GSGG…LFAP), 132-152 (LVVI…SLGT), 153-173 (VGAQ…IMTV), and 192-212 (LAGG…SASP).

It belongs to the MntP (TC 9.B.29) family.

The protein resides in the cell membrane. Functionally, probably functions as a manganese efflux pump. The chain is Putative manganese efflux pump MntP from Heliobacterium modesticaldum (strain ATCC 51547 / Ice1).